The sequence spans 260 residues: Hydroxyethylthiazole kinase 1 (260 aa).

Residue Met-39 coordinates substrate. Residues Arg-115 and Thr-160 each contribute to the ATP site. Gly-187 contacts substrate.

This sequence belongs to the Thz kinase family. Requires Mg(2+) as cofactor.

It catalyses the reaction 5-(2-hydroxyethyl)-4-methylthiazole + ATP = 4-methyl-5-(2-phosphooxyethyl)-thiazole + ADP + H(+). The protein operates within cofactor biosynthesis; thiamine diphosphate biosynthesis; 4-methyl-5-(2-phosphoethyl)-thiazole from 5-(2-hydroxyethyl)-4-methylthiazole: step 1/1. In terms of biological role, catalyzes the phosphorylation of the hydroxyl group of 4-methyl-5-beta-hydroxyethylthiazole (THZ). The chain is Hydroxyethylthiazole kinase 1 from Streptococcus pneumoniae serotype 4 (strain ATCC BAA-334 / TIGR4).